Consider the following 501-residue polypeptide: Dipeptide and tripeptide permease A (501 aa).

At 1–21 (MSTANKKPTESVSLNAFKQPK) the chain is on the cytoplasmic side. The helical transmembrane segment at 22 to 44 (AFYLIFSIELWERFGYYGLQGIM) threads the bilayer. Over 45–59 (AVYLVKQLGMSEADS) the chain is Periplasmic. A helical membrane pass occupies residues 60–80 (ITLFSSFSALVYGLVAIGGWL). Topologically, residues 81–89 (GDKILGTKR) are cytoplasmic. Residues 90 to 110 (VIMLGAVVLAIGYALVAWSGH) traverse the membrane as a helical segment. Asp-111 is a topological domain (periplasmic). The chain crosses the membrane as a helical span at residues 112-132 (AGIVYMGMAAIAVGNGLFKAN). Residues 133–153 (PSSLLSTCYAKDDPRLDGAFT) lie on the Cytoplasmic side of the membrane. A helical membrane pass occupies residues 154–174 (MYYMSVNIGSFFSMLATPWLA). Residues 175–178 (ARYG) are Periplasmic-facing. A helical transmembrane segment spans residues 179–199 (WSTAFALSVVGMLITVVNFAF). The Cytoplasmic portion of the chain corresponds to 200-219 (CQRWVKSYGSKPDFEPINFR). A helical membrane pass occupies residues 220-240 (NLLLTIVGIVVLIAVATWLLH). The Periplasmic portion of the chain corresponds to 241-246 (NQDIAR). Residues 247–267 (MVLGVIALGIVIIFGKEAFSM) form a helical membrane-spanning segment. At 268 to 274 (HGAARRK) the chain is on the cytoplasmic side. The helical transmembrane segment at 275 to 295 (MIVAFILMLQAIIFFVLYSQM) threads the bilayer. Residues 296-320 (PTSLNFFAIRNVEHSILGIAFEPEQ) lie on the Periplasmic side of the membrane. Residues 321-341 (YQALNPFWIITGSPILAAIYN) form a helical membrane-spanning segment. The Cytoplasmic segment spans residues 342-352 (RMGDTLPMPMK). Residues 353–373 (FAIGMVLCSGAFLILPLGAKF) form a helical membrane-spanning segment. Residues 374–383 (ANDAGIVSVN) are Periplasmic-facing. Residues 384–404 (WLIASYGLQSIGELMISGLGL) traverse the membrane as a helical segment. Residues 405–414 (AMVAQLVPQR) are Cytoplasmic-facing. The helical transmembrane segment at 415–435 (LMGFIMGSWFLTTAGANIIGG) threads the bilayer. Topologically, residues 436 to 459 (YVANLMAVPSDVTDPLMSLEVYGR) are periplasmic. Residues 460 to 480 (VFMQIGIATAVIAVLMLLTAP) traverse the membrane as a helical segment. At 481-501 (KLNRMTQDDDTAEKGSKAATV) the chain is on the cytoplasmic side.

This sequence belongs to the major facilitator superfamily. Proton-dependent oligopeptide transporter (POT/PTR) (TC 2.A.17) family. DtpA subfamily.

Its subcellular location is the cell inner membrane. Proton-dependent permease that transports di- and tripeptides. This chain is Dipeptide and tripeptide permease A, found in Salmonella typhi.